Reading from the N-terminus, the 197-residue chain is Shikimate kinase (197 aa).

ATP is bound at residue 26–31; the sequence is GSGKSR. Ser-30 contacts Mg(2+). Residues Asp-48, Arg-72, and Gly-94 each coordinate substrate. Arg-132 contacts ATP. A substrate-binding site is contributed by Arg-150.

Belongs to the shikimate kinase family. Monomer. Requires Mg(2+) as cofactor.

It is found in the cytoplasm. The enzyme catalyses shikimate + ATP = 3-phosphoshikimate + ADP + H(+). Its pathway is metabolic intermediate biosynthesis; chorismate biosynthesis; chorismate from D-erythrose 4-phosphate and phosphoenolpyruvate: step 5/7. Functionally, catalyzes the specific phosphorylation of the 3-hydroxyl group of shikimic acid using ATP as a cosubstrate. The chain is Shikimate kinase from Prochlorococcus marinus (strain MIT 9211).